The following is a 110-amino-acid chain: B3 domain-containing protein LOC_Os02g10420 (110 aa).

The segment at residues 1–104 (MSAMLNENVP…VLSVTVHKAD (104 aa)) is a DNA-binding region (TF-B3).

Its subcellular location is the nucleus. The chain is B3 domain-containing protein LOC_Os02g10420 from Oryza sativa subsp. japonica (Rice).